A 173-amino-acid polypeptide reads, in one-letter code: Large ribosomal subunit protein uL16 (173 aa).

The protein belongs to the universal ribosomal protein uL16 family.

The sequence is that of Large ribosomal subunit protein uL16 from Methanococcus maripaludis (strain DSM 14266 / JCM 13030 / NBRC 101832 / S2 / LL).